A 75-amino-acid polypeptide reads, in one-letter code: Signaling peptide TAXIMIN 1 (75 aa).

The signal sequence occupies residues Met-1–Val-29.

As to expression, expressed in shoot apical meristems (SAM); mostly specific to the L1 layer in the center of the meristem but also detected in the L2 layer in organ primordia. Also observed in the vasculature of seedling roots.

It localises to the secreted. Counteracted by the antibiotic cefotaxime during responses to light stress. Signaling peptide involved in the regulation of lateral organs separation, including fruits and leaves. Involved in the perception of and response to light stress via the control of sinapoyl-malate accumulation, a UV-B protecting compound. The polypeptide is Signaling peptide TAXIMIN 1 (Arabidopsis thaliana (Mouse-ear cress)).